A 68-amino-acid chain; its full sequence is Erythrodihydroneopterin triphosphate synthetase (68 aa).

Ser66 bears the Phosphoserine mark.

This chain is Erythrodihydroneopterin triphosphate synthetase, found in Cavia porcellus (Guinea pig).